The following is a 315-amino-acid chain: Probable inactive acetaldehyde dehydrogenase 1 (315 aa).

NAD(+) contacts are provided by residues 14-17 and Asn-288; that span reads SGDV.

The protein belongs to the acetaldehyde dehydrogenase family.

In Mycolicibacterium vanbaalenii (strain DSM 7251 / JCM 13017 / BCRC 16820 / KCTC 9966 / NRRL B-24157 / PYR-1) (Mycobacterium vanbaalenii), this protein is Probable inactive acetaldehyde dehydrogenase 1.